A 441-amino-acid polypeptide reads, in one-letter code: MPRARKGNALRKGGQRRGGGARSSTQADSGSSEDEAASEARSTTSDCPSLLSATTEDCLGGEAVDEQSQQENLEEKLKGYVDCLTDKSAKTRQGALESLRLALASRLLPDFLLERSLTLADALEKCLKKGKGEEQALAAAVLGILCVQLGPGPKGEELFRSLQPLLISVLSDSTASPTARLHCASALGLGCYVAATDVQDLVSCLACLEGVFSWSCGTSGSAASLVPASLHGLLCAALQAWALLLTICPGTHISHILDRQLPRLPQLLSSESVNLRIAAGEAIALLFELARDLEEDFVYEDMEALCGSLRTLATDSNKYRAKVDRRRQRSIFRAVLHFVEGGECEEETVRFGLEVLYIDSWARHRIYTAFKDVLGSGIHYHLQNNELLRDIFGLGPVLVLDAAALKACKISRFEKHLYNAAAFKARTKARSRARDKRADIL.

Positions 1–15 (MPRARKGNALRKGGQ) are enriched in basic residues. The interval 1–51 (MPRARKGNALRKGGQRRGGGARSSTQADSGSSEDEAASEARSTTSDCPSLL) is disordered.

This sequence belongs to the IFRD family. In terms of assembly, associates with ribosomes; promoting ribosome inactivation.

In terms of biological role, ribosome-binding protein that acts as an inhibitor of mRNA translation by promoting ribosome inactivation. Associates with the P- and E-sites of the ribosome and inserts a C-terminal helix into the mRNA exit channel to preclude translation. The protein is Interferon-related developmental regulator 2 of Mus musculus (Mouse).